The sequence spans 184 residues: ATP-dependent protease subunit HslV (184 aa).

Thr-12 is a catalytic residue. Na(+)-binding residues include Ala-166, Cys-169, and Thr-172.

It belongs to the peptidase T1B family. HslV subfamily. A double ring-shaped homohexamer of HslV is capped on each side by a ring-shaped HslU homohexamer. The assembly of the HslU/HslV complex is dependent on binding of ATP.

The protein localises to the cytoplasm. It catalyses the reaction ATP-dependent cleavage of peptide bonds with broad specificity.. Allosterically activated by HslU binding. Functionally, protease subunit of a proteasome-like degradation complex believed to be a general protein degrading machinery. The protein is ATP-dependent protease subunit HslV of Brucella canis (strain ATCC 23365 / NCTC 10854 / RM-666).